The chain runs to 85 residues: Small ribosomal subunit protein bS16c (85 aa).

This sequence belongs to the bacterial ribosomal protein bS16 family.

It localises to the plastid. Its subcellular location is the chloroplast. This Oryza nivara (Indian wild rice) protein is Small ribosomal subunit protein bS16c.